A 478-amino-acid chain; its full sequence is Major facilitator superfamily domain-containing protein 12 (478 aa).

Met1 is subject to N-acetylmethionine. The Cytoplasmic segment spans residues 1 to 26 (MVPGSPAAGAGPAPRALSLAARLSYA). Residues 27–47 (VGHFLNDLCASMWFTYLLLYL) traverse the membrane as a helical segment. The Lumenal portion of the chain corresponds to 48 to 56 (HSVRAYSSR). Residues 57–77 (GAGLLLLLGQVADGLCTPLVG) form a helical membrane-spanning segment. Residues 78 to 97 (YEADRAAGRCARCGPRKAWH) are Cytoplasmic-facing. A helical membrane pass occupies residues 98–118 (LVGTVCVLLSFPFIFSPCLGC). Residues 119–124 (GAATPE) are Lumenal-facing. The helical transmembrane segment at 125–145 (WAALLYYGPFIVVFQFGWAAT) threads the bilayer. At 146–168 (QIAHLSLIPELVTSDHEKVELTA) the chain is on the cytoplasmic side. The chain crosses the membrane as a helical span at residues 169 to 189 (LRYAFTVVANITVFGAAWLLL). Residues 190 to 216 (RLQGSAREGPPDEAGDHLGVQDVPVFR) lie on the Lumenal side of the membrane. The helical transmembrane segment at 217–237 (TLSLCVVGVGAVFSLLFHLGT) threads the bilayer. Residues 238 to 277 (RERRRPPAQEPDERSPLLAPATARPLLLWKHWLREPSFYQ) lie on the Cytoplasmic side of the membrane. Residues 278 to 300 (VGLLYMSTRLIVNLSQTYIAMYL) form a helical membrane-spanning segment. Residues 301 to 308 (TYSLNLPK) lie on the Lumenal side of the membrane. Residues 309–329 (KFIATIPLVMYVSGFCSSFLM) form a helical membrane-spanning segment. Residues 330-338 (KPVNKCIGR) lie on the Cytoplasmic side of the membrane. Residues 339–359 (NMTYFVGLLVILAFAAWVVLV) traverse the membrane as a helical segment. Residues 360–361 (DE) are Lumenal-facing. The helical transmembrane segment at 362–382 (LGMAVYVAAVLLGGGCATILV) threads the bilayer. At 383–400 (TSLAMTADLIGPHTHSGA) the chain is on the cytoplasmic side. A helical membrane pass occupies residues 401–421 (FVYGAMSFSDKVANGLAVMVI). At 422–436 (QSLHPCSLELCCRAC) the chain is on the lumenal side. A helical membrane pass occupies residues 437–457 (VGFYHWVMVAVTGGVGVAATL). The Cytoplasmic portion of the chain corresponds to 458–478 (SLCSLLVWPIRLRSWDPGAQP).

Belongs to the major facilitator superfamily.

It localises to the melanosome membrane. The protein resides in the lysosome membrane. It catalyses the reaction L-cysteine(in) = L-cysteine(out). In terms of biological role, transporter that mediates the import of cysteine into melanosomes, thereby regulating skin/hair pigmentation. In melanosomes, cysteine import is required both for normal levels of cystine, the oxidized dimer of cysteine, and provide cysteine for the production of the cysteinyldopas used in pheomelanin synthesis, thereby regulating skin/hair pigmentation. Also catalyzes import of cysteine into lysosomes in non-pigmented cells, regulating lysosomal cystine and cysteine storage, which is essnetial for redox homeostasis. This Equus caballus (Horse) protein is Major facilitator superfamily domain-containing protein 12.